Here is a 304-residue protein sequence, read N- to C-terminus: Choline-phosphate cytidylyltransferase 2 (304 aa).

CTP is bound by residues 28–36 and Lys-66; that span reads IFDLFHFGH. The substrate site is built by Lys-66 and Trp-95. CTP contacts are provided by residues 112 to 113, Tyr-117, and 142 to 146; these read HD and RTEGI. A disordered region spans residues 266–292; the sequence is QNGLTISKDNDDEQMSDDNEFAEEDCV. The segment covering 275–291 has biased composition (acidic residues); that stretch reads NDDEQMSDDNEFAEEDC.

This sequence belongs to the cytidylyltransferase family.

It carries out the reaction phosphocholine + CTP + H(+) = CDP-choline + diphosphate. The protein operates within phospholipid metabolism; phosphatidylcholine biosynthesis; phosphatidylcholine from phosphocholine: step 1/2. Its function is as follows. Plays an important role in the biosynthesis of the phospholipid phosphatidylcholine. Catalyzes the formation of CDP-choline. This chain is Choline-phosphate cytidylyltransferase 2, found in Arabidopsis thaliana (Mouse-ear cress).